Reading from the N-terminus, the 245-residue chain is Triosephosphate isomerase (245 aa).

A substrate-binding site is contributed by 9 to 11; it reads NWK. Catalysis depends on histidine 92, which acts as the Electrophile. The active-site Proton acceptor is the glutamate 164. Substrate is bound by residues glycine 170, serine 209, and 230 to 231; that span reads GG.

Belongs to the triosephosphate isomerase family. In terms of assembly, homodimer.

Its subcellular location is the cytoplasm. It catalyses the reaction D-glyceraldehyde 3-phosphate = dihydroxyacetone phosphate. The protein operates within carbohydrate biosynthesis; gluconeogenesis. It functions in the pathway carbohydrate degradation; glycolysis; D-glyceraldehyde 3-phosphate from glycerone phosphate: step 1/1. In terms of biological role, involved in the gluconeogenesis. Catalyzes stereospecifically the conversion of dihydroxyacetone phosphate (DHAP) to D-glyceraldehyde-3-phosphate (G3P). This Cupriavidus pinatubonensis (strain JMP 134 / LMG 1197) (Cupriavidus necator (strain JMP 134)) protein is Triosephosphate isomerase.